Consider the following 491-residue polypeptide: Probable glycine dehydrogenase (decarboxylating) subunit 2 (491 aa).

Residue Lys273 is modified to N6-(pyridoxal phosphate)lysine.

Belongs to the GcvP family. C-terminal subunit subfamily. As to quaternary structure, the glycine cleavage system is composed of four proteins: P, T, L and H. In this organism, the P 'protein' is a heterodimer of two subunits. The cofactor is pyridoxal 5'-phosphate.

It catalyses the reaction N(6)-[(R)-lipoyl]-L-lysyl-[glycine-cleavage complex H protein] + glycine + H(+) = N(6)-[(R)-S(8)-aminomethyldihydrolipoyl]-L-lysyl-[glycine-cleavage complex H protein] + CO2. In terms of biological role, the glycine cleavage system catalyzes the degradation of glycine. The P protein binds the alpha-amino group of glycine through its pyridoxal phosphate cofactor; CO(2) is released and the remaining methylamine moiety is then transferred to the lipoamide cofactor of the H protein. In Bacillus cereus (strain AH187), this protein is Probable glycine dehydrogenase (decarboxylating) subunit 2.